The sequence spans 96 residues: Probable quinol oxidase subunit 4 (96 aa).

The next 3 membrane-spanning stretches (helical) occupy residues 8 to 28, 36 to 56, and 68 to 88; these read TVGF…TLYT, LTII…MFMH, and FKVI…YWVM.

This sequence belongs to the cytochrome c oxidase bacterial subunit 4 family.

It localises to the cell membrane. It catalyses the reaction 2 a quinol + O2 = 2 a quinone + 2 H2O. Catalyzes quinol oxidation with the concomitant reduction of oxygen to water. In Staphylococcus aureus (strain USA300), this protein is Probable quinol oxidase subunit 4 (qoxD).